The chain runs to 112 residues: C-C motif chemokine 27 (112 aa).

The signal sequence occupies residues 1–24 (MKGPPTFCSLLLLSLLLSPDPTAA). 2 disulfide bridges follow: cysteine 33–cysteine 62 and cysteine 34–cysteine 77.

The protein belongs to the intercrine beta (chemokine CC) family. As to quaternary structure, monomer, dimer, and tetramer. Heparin avidly promotes oligomerization. Interacts with TNFAIP6 (via Link domain). As to expression, testis, thymus, placenta, ovary and skin.

The protein resides in the secreted. In terms of biological role, chemotactic factor that attracts skin-associated memory T-lymphocytes. May play a role in mediating homing of lymphocytes to cutaneous sites. Binds to CCR10. The polypeptide is C-C motif chemokine 27 (CCL27) (Homo sapiens (Human)).